Reading from the N-terminus, the 530-residue chain is MNQPVFVLNTNAKRENQKEAQQGIFLAVKSVASIIKTCLGPKAMLKMILDPMGTTVVTNDGNAILREIDVTHPAAKSMIELSRAQDENVGDGTTSVVILAAEVLASSELFIEKKIHPHYIIKAFRMALDDSLSIVDQYSVAIDLKNRPEVLKVVQSCIGTKFIGKWGSLMCNLALDAVMTVHIQEEDGRSEIDIKRYAKVEKIPGGDISDCRVIRGVMLNKDVTHPKMKRMIKNPRIVLLDCSLEYKKGESDTMVDITNEDDFSALLKIEEEYVQRICEDIIKLKPDLVFTEKGVSDLAQHFFVKKGITCLRRLKKSENNRIARISGATIVSRTDELQESDIGTGCGLFEIRKIGDEYFTFLEDCKEPKACTILLRGASKDILNEVERNLTDALNVARNIVLDPRLVPGGGAIEMALSQALSEKSKSIEGLHQLPYKALAQSLECIPKILAQNCGANTVKLLTELRAKHATNPTENYTYGVDGDNGTIVDMKQLGIWDTHSVKVQTLKTAIESACTMLRVDHIASAASKQ.

Belongs to the TCP-1 chaperonin family. As to quaternary structure, heterooligomeric complex of about 850 to 900 kDa that forms two stacked rings, 12 to 16 nm in diameter.

The protein resides in the cytoplasm. Molecular chaperone; assists the folding of proteins upon ATP hydrolysis. Known to play a role, in vitro, in the folding of actin and tubulin. This is T-complex protein 1 subunit gamma (cct3) from Dictyostelium discoideum (Social amoeba).